We begin with the raw amino-acid sequence, 449 residues long: C4-dicarboxylate transport protein (449 aa).

Helical transmembrane passes span 5 to 25 (AVFK…VSLG), 45 to 65 (LIKM…IAGM), 77 to 97 (LAVL…LIVV), 149 to 169 (GDML…HSFG), 185 to 205 (VLFG…FGAM), 231 to 251 (CVIF…FSII), 298 to 318 (GYSF…VFIA), 332 to 352 (TLLV…GSGF), and 353 to 373 (IVLA…LALI).

Belongs to the dicarboxylate/amino acid:cation symporter (DAACS) (TC 2.A.23) family.

Its subcellular location is the cell inner membrane. Functionally, responsible for the transport of dicarboxylates such as succinate, fumarate, and malate from the periplasm across the membrane. The sequence is that of C4-dicarboxylate transport protein from Dechloromonas aromatica (strain RCB).